A 248-amino-acid polypeptide reads, in one-letter code: Probable transcriptional regulatory protein ECH_0704 (248 aa).

Residues 1–21 (MAGHSQFANIKHRKGAQDAKR) are disordered.

This sequence belongs to the TACO1 family.

It is found in the cytoplasm. The chain is Probable transcriptional regulatory protein ECH_0704 from Ehrlichia chaffeensis (strain ATCC CRL-10679 / Arkansas).